The sequence spans 802 residues: Endoplasmin (802 aa).

The N-terminal stretch at 1 to 21 (MRALWVLGLCCVLLTFGSARA) is a signal peptide. The SRT pseudosubstrate motif motif lies at 42–44 (SRT). N-linked (GlcNAc...) asparagine glycosylation occurs at N62. At S64 the chain carries Phosphoserine. N107 carries N-linked (GlcNAc...) asparagine glycosylation. N107, D149, and N162 together coordinate ATP. The residue at position 168 (K168) is an N6-(2-hydroxyisobutyryl)lysine. Phosphoserine is present on S172. ATP is bound at residue F199. N-linked (GlcNAc...) asparagine glycosylation is present at N217. A disordered region spans residues 288-323 (TVEEPAEEEEAAKEEKEEADDEAAVEEEEEEKKPKT). The segment covering 289–317 (VEEPAEEEEAAKEEKEEADDEAAVEEEEE) has biased composition (acidic residues). Position 403 is a phosphoserine (S403). K404 bears the N6-succinyllysine mark. N445 carries an N-linked (GlcNAc...) asparagine glycan. S447 bears the Phosphoserine mark. K479 is subject to N6-acetyllysine. 2 N-linked (GlcNAc...) asparagine glycosylation sites follow: N481 and N502. An N6-succinyllysine modification is found at K633. The interval 750–802 (DPDAKVEEEPEEEPEDTTEDTEQDEEEEMDAGTDEEEQEQEPEKKSTAEKDEL) is disordered. Residues 757 to 789 (EEPEEEPEDTTEDTEQDEEEEMDAGTDEEEQEQ) are compositionally biased toward acidic residues. A Phosphothreonine modification is found at T782. Residues 790–802 (EPEKKSTAEKDEL) show a composition bias toward basic and acidic residues. The short motif at 799–802 (KDEL) is the Prevents secretion from ER element.

It belongs to the heat shock protein 90 family. In terms of assembly, homodimer; disulfide-linked. Component of an EIF2 complex at least composed of CELF1/CUGBP1, CALR, CALR3, EIF2S1, EIF2S2, HSP90B1 and HSPA5. Part of a large chaperone multiprotein complex comprising DNAJB11, HSP90B1, HSPA5, HYOU, PDIA2, PDIA4, PDIA6, PPIB, SDF2L1, UGGT1 and very small amounts of ERP29, but not, or at very low levels, CALR nor CANX. Interacts with AIMP1; regulates its retention in the endoplasmic reticulum. Hyperglycosylated form interacts with OS9; promoting its degradation by the endoplasmic reticulum associated degradation (ERAD). Interacts with CNPY3. This interaction is disrupted in the presence of ATP. Interacts with TLR4 and TLR9, but not with TLR3. Interacts with MZB1 in a calcium-dependent manner. Interacts with METTL23. Interacts with IL1B; the interaction facilitates cargo translocation into the ERGIC. Interacts with EIF2AK3. In terms of processing, phosphorylated by CK2. N-glycosylated cotranslationally at Asn-217 by STT3A-containing OST-A complex: this glycosylation is constitutive. In response to various stress, 5 additional facultative sites (Asn-62, Asn-107, Asn-445, Asn-481 and Asn-502) can be glycosylated post-translationally by STT3B-containing OST-B complex, leading to a hyperglycosylated form that is degraded by the ER-associated degradation (ERAD) pathway. In normal conditions, the OST-A complex together with CCDC134 prevent glycosylation at facultative sites during protein folding, thereby preventing hyperglycosylation. Mechanistically, nascent HSP90B1 is tethered during translation to a specialized CCDC134-containing translocon that forms a microenvironment for its folding, in which STT3A associates with the SRT pseudosubstrate motif, and prevents access to facultative glycosylation sites until folding is completed, rendering its facultative sites inaccessible to the OST-B complex.

The protein resides in the endoplasmic reticulum lumen. It is found in the sarcoplasmic reticulum lumen. It localises to the melanosome. It carries out the reaction ATP + H2O = ADP + phosphate + H(+). ATP-dependent chaperone involved in the processing of proteins in the endoplasmic reticulum, regulating their transport. Together with MESD, acts as a modulator of the Wnt pathway by promoting the folding of LRP6, a coreceptor of the canonical Wnt pathway. When associated with CNPY3, required for proper folding of Toll-like receptors. Promotes folding and trafficking of TLR4 to the cell surface. May participate in the unfolding of cytosolic leaderless cargos (lacking the secretion signal sequence) such as the interleukin 1/IL-1 to facilitate their translocation into the ERGIC (endoplasmic reticulum-Golgi intermediate compartment) and secretion; the translocation process is mediated by the cargo receptor TMED10. This Oryctolagus cuniculus (Rabbit) protein is Endoplasmin (HSP90B1).